Reading from the N-terminus, the 432-residue chain is Probable pectate lyase 22 (432 aa).

Positions 1–45 (MFRPNSLLIPSNLSTTKSQRNTMLNSSYLSFALIFFCCILFSALA) are cleaved as a signal peptide. N-linked (GlcNAc...) asparagine glycosylation occurs at Asn-65. Residues Asp-228, Asp-252, and Asp-256 each contribute to the Ca(2+) site. Arg-308 is a catalytic residue.

It belongs to the polysaccharide lyase 1 family. It depends on Ca(2+) as a cofactor.

It catalyses the reaction Eliminative cleavage of (1-&gt;4)-alpha-D-galacturonan to give oligosaccharides with 4-deoxy-alpha-D-galact-4-enuronosyl groups at their non-reducing ends.. It functions in the pathway glycan metabolism; pectin degradation; 2-dehydro-3-deoxy-D-gluconate from pectin: step 2/5. The protein is Probable pectate lyase 22 of Arabidopsis thaliana (Mouse-ear cress).